The sequence spans 793 residues: Outer membrane protein assembly factor BamA (793 aa).

The signal sequence occupies residues 1–19 (MKKLLIASLLFGTTTTVFA). 5 consecutive POTRA domains span residues 22–89 (FVAK…VVAK), 90–170 (SIIS…INED), 173–259 (AKLA…VNEG), 262–341 (YDLR…VDAG), and 344–418 (LTVR…VKER).

Belongs to the BamA family. Part of the Bam complex.

The protein localises to the cell outer membrane. In terms of biological role, part of the outer membrane protein assembly complex, which is involved in assembly and insertion of beta-barrel proteins into the outer membrane. The chain is Outer membrane protein assembly factor BamA from Haemophilus influenzae.